The chain runs to 254 residues: 5-oxoprolinase subunit A (254 aa).

It belongs to the LamB/PxpA family. As to quaternary structure, forms a complex composed of PxpA, PxpB and PxpC.

It catalyses the reaction 5-oxo-L-proline + ATP + 2 H2O = L-glutamate + ADP + phosphate + H(+). Its function is as follows. Catalyzes the cleavage of 5-oxoproline to form L-glutamate coupled to the hydrolysis of ATP to ADP and inorganic phosphate. The sequence is that of 5-oxoprolinase subunit A from Burkholderia lata (strain ATCC 17760 / DSM 23089 / LMG 22485 / NCIMB 9086 / R18194 / 383).